The sequence spans 419 residues: Tyrosine--tRNA ligase (419 aa).

L-tyrosine is bound at residue tyrosine 34. A 'HIGH' region motif is present at residues 39 to 48 (PSGDSMHIGH). L-tyrosine-binding residues include tyrosine 168 and glutamine 172. A 'KMSKS' region motif is present at residues 230–234 (KFGKS). Lysine 233 contributes to the ATP binding site. An S4 RNA-binding domain is found at 352 to 418 (ANLVDWLVTL…GKKKYFLVSY (67 aa)).

This sequence belongs to the class-I aminoacyl-tRNA synthetase family. TyrS type 1 subfamily. Homodimer.

The protein resides in the cytoplasm. The catalysed reaction is tRNA(Tyr) + L-tyrosine + ATP = L-tyrosyl-tRNA(Tyr) + AMP + diphosphate + H(+). In terms of biological role, catalyzes the attachment of tyrosine to tRNA(Tyr) in a two-step reaction: tyrosine is first activated by ATP to form Tyr-AMP and then transferred to the acceptor end of tRNA(Tyr). The chain is Tyrosine--tRNA ligase from Listeria monocytogenes serotype 4a (strain HCC23).